The chain runs to 722 residues: A-type ATP synthase subunit I (722 aa).

Over residues 309–321 (DYKPTGHDQHVPA) the composition is skewed to basic and acidic residues. Positions 309 to 352 (DYKPTGHDQHVPADDGADAATDGGTTASFDETDSPPVIQDNPGP) are disordered. Over residues 326-335 (DAATDGGTTA) the composition is skewed to low complexity. 8 helical membrane passes run 384–404 (FYGF…LGFW), 419–439 (GVAM…GEVF), 474–494 (LAAS…FGFV), 505–525 (AALE…WLFS), 554–574 (LAAA…AGFL), 590–610 (IAAV…LVFG), 639–659 (FMLF…MHMG), and 662–682 (GILI…ALGV).

It belongs to the V-ATPase 116 kDa subunit family. Has multiple subunits with at least A(3), B(3), C, D, E, F, H, I and proteolipid K(x).

The protein resides in the cell membrane. In terms of biological role, component of the A-type ATP synthase that produces ATP from ADP in the presence of a proton gradient across the membrane. The protein is A-type ATP synthase subunit I of Halobacterium salinarum (strain ATCC 700922 / JCM 11081 / NRC-1) (Halobacterium halobium).